A 678-amino-acid chain; its full sequence is MAAVKSCVEEEKIDCDLDFDKVIDVQLDDNHCAKLKAGYESLLSRGALTVTEADFTPNETAESEFFLSLLNSASTKREAKSYLARLKAQHPPKAQTEPTTGHSKGTVTQSLPSGVNLGSFYGASRSVYDSPVFRHDSTPLPPPSELPEERLHLALIKIRTPQLLDDTIINGVAKTLSQLSRLGMACCVVVDPGTAGNANTLRRVAAEQAERISIAVDAQPDSKSAHLDSVLSLSPMFPELPTVLSRKALLNPLRDGQIVVVAPIAYTEDVPKAVTISANDAILALTKELAGLAMRPDPDEDPWLTAQKIAKLQKEVSLDRVILLDPLGGIPSFRGPQTSHVFINMEQEFDDIKNELLHVQSSEACTATTPKGGNTFVEDPLERHLDNLQLSQNVLAMLPSASSGIITSPLEVSNSARTPQANPSDVSAVGTRRQRNPLIHNLLTDKPLLSSSLPMSRREAMNRRRGSINTPSSHTTFVKRGMPLTMIPNPRVEVWTAQNRPRLSLDDPSIDLPRLVQLIEDSFNRKLDVQDYLNRVNDRLAGLIIAGEYEGGAILTWELPPGVEDDGSPASEARMVPYLDKFAVLKRSQGAGGVADIVFNAMVRSCFPNGVCWRSRKDNPVNKWYFERSTGTWKLSDTNWTMFWTTPGLTENSQRFSDYEQVCRSIQPSWADDTGVVD.

Residues 86-111 (LKAQHPPKAQTEPTTGHSKGTVTQSL) form a disordered region. Positions 96-111 (TEPTTGHSKGTVTQSL) are enriched in polar residues. The region spanning 499 to 668 (NRPRLSLDDP…YEQVCRSIQP (170 aa)) is the N-acetyltransferase domain.

This sequence belongs to the acetyltransferase family.

The protein resides in the mitochondrion. It catalyses the reaction L-glutamate + acetyl-CoA = N-acetyl-L-glutamate + CoA + H(+). It participates in amino-acid biosynthesis; L-arginine biosynthesis; N(2)-acetyl-L-ornithine from L-glutamate: step 1/4. In terms of biological role, N-acetylglutamate synthase involved in arginine biosynthesis. The sequence is that of Amino-acid acetyltransferase, mitochondrial (arg2) from Aspergillus oryzae (strain ATCC 42149 / RIB 40) (Yellow koji mold).